The following is a 195-amino-acid chain: Interferon tau (195 aa).

Residues 1–23 form the signal peptide; sequence MAFVLSLRMALVLVSYCPGGSLG. 2 cysteine pairs are disulfide-bonded: cysteine 24–cysteine 122 and cysteine 52–cysteine 162. Asparagine 101 carries an N-linked (GlcNAc...) asparagine glycan.

This sequence belongs to the alpha/beta interferon family. IFN-alphaII subfamily. As to expression, constitutively and exclusively expressed in the mononuclear cells of the extraembryonic trophectoderm.

It localises to the secreted. Paracrine hormone primarily responsible for maternal recognition of pregnancy. Interacts with endometrial receptors, probably type I interferon receptors, and blocks estrogen receptor expression, preventing the estrogen-induced increase in oxytocin receptor expression in the endometrium. This results in the suppression of the pulsatile endometrial release of the luteolytic hormone prostaglandin F2-alpha, hindering the regression of the corpus luteum (luteolysis) and therefore a return to ovarian cyclicity. This, and a possible direct effect of IFN-tau on prostaglandin synthesis, leads in turn to continued ovarian progesterone secretion, which stimulates the secretion by the endometrium of the nutrients required for the growth of the conceptus. In summary, displays particularly high antiviral and antiproliferative potency concurrently with particular weak cytotoxicity, high antiluteolytic activity and immunomodulatory properties. In contrast with other IFNs, IFN-tau is not virally inducible. The polypeptide is Interferon tau (IFNT) (Ovibos moschatus (Muskox)).